Here is a 146-residue protein sequence, read N- to C-terminus: Catabolic 3-dehydroquinase (146 aa).

Tyrosine 24 functions as the Proton acceptor in the catalytic mechanism. Positions 78, 84, and 91 each coordinate substrate. Histidine 104 serves as the catalytic Proton donor. Substrate contacts are provided by residues 105 to 106 and arginine 115; that span reads IT.

Belongs to the type-II 3-dehydroquinase family. As to quaternary structure, homododecamer. Adopts a ring-like structure, composed of an arrangement of two hexameric rings stacked on top of one another.

It catalyses the reaction 3-dehydroquinate = 3-dehydroshikimate + H2O. Its pathway is aromatic compound metabolism; 3,4-dihydroxybenzoate biosynthesis; 3,4-dihydroxybenzoate from 3-dehydroquinate: step 1/2. In terms of biological role, is involved in the catabolism of quinate. Allows the utilization of quinate as carbon source via the beta-ketoadipate pathway. The polypeptide is Catabolic 3-dehydroquinase (Candida albicans (strain SC5314 / ATCC MYA-2876) (Yeast)).